The following is a 1507-amino-acid chain: Nonribosomal peptide synthetase ataP (1507 aa).

Residues M1–Y72 enclose the Carrier 1 domain. S33 bears the O-(pantetheine 4'-phosphoryl)serine mark. Residues T98–T119 are disordered. A compositionally biased stretch (low complexity) spans G105 to T115. Residues T163–L429 form a condensation 1 region. The tract at residues A514–R893 is adenylation. A Carrier 2 domain is found at N988–Q1065. S1025 carries the O-(pantetheine 4'-phosphoryl)serine modification. The segment at T1099 to N1471 is condensation 2.

It belongs to the NRP synthetase family.

Its pathway is mycotoxin biosynthesis. Functionally, nonribosomal peptide synthetase; part of the gene cluster that mediates the biosynthesis of acetylaranotin, a member of the epipolythiodioxopiperazine (ETP) class of toxins characterized by a disulfide-bridged cyclic dipeptide. The first step of acetylaranotin biosynthesis is performed by the NRPS ataP which produces diketopiperazine cyclo-L-Phe-L-Phe via the condensation of 2 phenylalanines (L-Phe). The ataC domain of ataTC then catalyzes the formation of bishydroxylation of cyclo-L-Phe-L-Phe. The glutathione S-transferase domain ataG in ataIMG further catalyzes the conjugation of two glutathiones to the bishydroxylated intermediate. Next, the dipeptidase ataJ removes the Glu residues. The following step is performed by the carbon sulfur lyase domain ataI of ataIMG which may convert the bis-cysteinyl adduct to yield an epidithiol intermediate. The ataT domain from ataTC then catalyzes the oxidation of the free dithiols, followed by a cyclization step catalyzed by the cytochrome P450 ataF. AtaF probably acts as an epoxidase to promote a dual epoxidation formation at C8 and C9 along with C8' and C9', followed by the spontaneous nucleophilic attack of the amide nitrogens N10 and N10' to yield an intermediate with the pyrrolidine partial structure. The final steps of acetylaranotin biosynthesis involve the acetylation and ring rearrangement of an epitetrathiodiketopiperazine intermediate to produce acetylaranotin. AtaH probably catalyzes the acetylation of epitetrathiodiketopiperazine to produce a diacetate and ataY is responsible for the formation of the dihydrooxepin moiety that converts the diacetate intermediate to acetylaranotin via acetylapoaranotin. Both enzymes could function independently in the absence of the other. The acetylaranotin bis-thiomethyltransferase ataS located outside of acetylaranotin gene cluster is the main thiomethyltransferase responsible for converting acetylaranotin and its related intermediates to their methylated forms. The polypeptide is Nonribosomal peptide synthetase ataP (Aspergillus terreus (strain NIH 2624 / FGSC A1156)).